Here is a 623-residue protein sequence, read N- to C-terminus: UvrABC system protein C (623 aa).

Positions 27 to 105 (GSPGVYRMLD…IKQLKPRYNV (79 aa)) constitute a GIY-YIG domain. The UVR domain maps to 215–250 (TKVQANLAEQMQAASEAMEFERAAALRDRIKALTQV).

Belongs to the UvrC family. In terms of assembly, interacts with UvrB in an incision complex.

The protein localises to the cytoplasm. Functionally, the UvrABC repair system catalyzes the recognition and processing of DNA lesions. UvrC both incises the 5' and 3' sides of the lesion. The N-terminal half is responsible for the 3' incision and the C-terminal half is responsible for the 5' incision. The protein is UvrABC system protein C of Cereibacter sphaeroides (strain ATCC 17023 / DSM 158 / JCM 6121 / CCUG 31486 / LMG 2827 / NBRC 12203 / NCIMB 8253 / ATH 2.4.1.) (Rhodobacter sphaeroides).